The primary structure comprises 396 residues: Actin-related protein 6 (396 aa).

Threonine 2 bears the N-acetylthreonine mark. Lysine 260 carries the N6-acetyllysine modification.

Belongs to the actin family. ARP6 subfamily. Component of the chromatin-remodeling SRCAP complex composed of at least SRCAP, DMAP1, RUVBL1, RUVBL2, ACTL6A, YEATS4, ACTR6 and ZNHIT1. Interacts with CBX1, CBX3 and CBX5.

The protein resides in the cytoplasm. It is found in the cytoskeleton. It localises to the nucleus. The protein localises to the nucleolus. Functionally, required for formation and/or maintenance of proper nucleolar structure and function. Plays a dual role in the regulation of ribosomal DNA (rDNA) transcription. In the presence of high glucose, maintains active rDNA transcription through H2A.Z deposition and under glucose starvation, is required for the repression of rDNA transcription, and this function may be independent of H2A.Z. This is Actin-related protein 6 (ACTR6) from Homo sapiens (Human).